We begin with the raw amino-acid sequence, 98 residues long: NADH-ubiquinone oxidoreductase chain 4L (98 aa).

The next 3 helical transmembrane spans lie at 1-21 (MPPI…GMLV), 29-49 (SLLC…TMAL), and 61-81 (IVLL…LVMV).

It belongs to the complex I subunit 4L family. In terms of assembly, core subunit of respiratory chain NADH dehydrogenase (Complex I) which is composed of 45 different subunits.

The protein localises to the mitochondrion inner membrane. The enzyme catalyses a ubiquinone + NADH + 5 H(+)(in) = a ubiquinol + NAD(+) + 4 H(+)(out). In terms of biological role, core subunit of the mitochondrial membrane respiratory chain NADH dehydrogenase (Complex I) which catalyzes electron transfer from NADH through the respiratory chain, using ubiquinone as an electron acceptor. Part of the enzyme membrane arm which is embedded in the lipid bilayer and involved in proton translocation. The sequence is that of NADH-ubiquinone oxidoreductase chain 4L (MT-ND4L) from Orycteropus afer (Aardvark).